Consider the following 339-residue polypeptide: MSGQLERCEREWHELEGEFQELQETHRIYKQKLEELTSLQTLCSTSISKQKRHLKDLKHTLQRYKRHSSHEEAALIQQMTANIKERQNVFFDMEAYLPKKNGLYLNLVLGNVSVTLLSNQAKFAYKDEYEKFKLYLTIILLLGAVACRFVLHYRVTDEVFNFLLVWYYCTLTIRESILISNGSRIKGWWVSHHYVSTFLSGVMLTWPNGLIYQKFRNQFLAFSIFQSCVQFLQYYYQRGCLYRLRALGERNHLDLTVEGFQSWMWRGLTFLLPFLFCGHFWQLYNAVTLFELSTHEECKEWQVFVLALTFLILFLGNFLTTLKVVHAKLHKNRNKTKQP.

The stretch at 1 to 67 (MSGQLERCER…KHTLQRYKRH (67 aa)) forms a coiled coil. 6 helical membrane-spanning segments follow: residues 102–124 (GLYLNLVLGNVSVTLLSNQAKFA), 132–152 (FKLYLTIILLLGAVACRFVLH), 159–179 (VFNFLLVWYYCTLTIRESILI), 187–207 (GWWVSHHYVSTFLSGVMLTWP), 270–290 (FLLPFLFCGHFWQLYNAVTLF), and 302–322 (QVFVLALTFLILFLGNFLTTL).

This sequence belongs to the TMEM120 family. In terms of assembly, heterooligomer with TMEM120A. As to expression, expressed in inguinal and subcutaneous white adipose tissue and in brown adipose tissue.

It is found in the nucleus inner membrane. Its function is as follows. Necessary for efficient adipogenesis. Does not show ion channel activity. This is Transmembrane protein 120B from Mus musculus (Mouse).